A 333-amino-acid polypeptide reads, in one-letter code: Acyl-CoA wax alcohol acyltransferase 2 (333 aa).

3 helical membrane-spanning segments follow: residues Val-15–Val-35, Tyr-38–Phe-58, and Ile-130–Leu-150.

This sequence belongs to the diacylglycerol acyltransferase family. In terms of assembly, monomer. As to expression, highly expressed in skin, where it is primarily restricted to undifferentiated peripheral sebocytes. Also expressed at lower level in other tissues except pancreas.

The protein localises to the endoplasmic reticulum membrane. The catalysed reaction is a long chain fatty alcohol + a fatty acyl-CoA = a wax ester + CoA. It carries out the reaction all-trans-retinol + an acyl-CoA = an all-trans-retinyl ester + CoA. The enzyme catalyses an acyl-CoA + a 1,2-diacyl-sn-glycerol = a triacyl-sn-glycerol + CoA. It catalyses the reaction 11-cis-retinol + a fatty acyl-CoA = 11-cis-retinyl ester + CoA. The catalysed reaction is 9-cis-retinol + a fatty acyl-CoA = 9-cis-retinyl ester + CoA. It carries out the reaction 13-cis-retinol + a fatty acyl-CoA = 13-cis-retinyl ester + CoA. The enzyme catalyses a 1-acylglycerol + an acyl-CoA = a 1,2-diacylglycerol + CoA. It catalyses the reaction 1-O-alkylglycerol + an acyl-CoA = 1-O-alkyl-3-acylglycerol + CoA. The catalysed reaction is a 2-acylglycerol + an acyl-CoA = a 1,2-diacyl-sn-glycerol + CoA. It carries out the reaction 2-(9Z-octadecenoyl)-glycerol + hexadecanoyl-CoA = 1-hexadecanoyl-2-(9Z-octadecenoyl)-sn-glycerol + CoA. The enzyme catalyses 1,2-di-(9Z-octadecenoyl)-sn-glycerol + hexadecanoyl-CoA = 1,2-di-(9Z)-octadecenoyl-3-hexadecanoyl-sn-glycerol + CoA. It catalyses the reaction hexadecan-1-ol + hexadecanoyl-CoA = hexadecanyl hexadecanoate + CoA. The catalysed reaction is hexadecane-1,2-diol + hexadecanoyl-CoA = 2-hydroxyhexadecyl hexadecanoate + CoA. It carries out the reaction 9-cis-retinol + hexadecanoyl-CoA = 9-cis-retinyl hexadecanoate + CoA. The enzyme catalyses all-trans-retinol + hexadecanoyl-CoA = all-trans-retinyl hexadecanoate + CoA. It catalyses the reaction 1,2-di-(9Z-octadecenoyl)-sn-glycerol + (9Z)-octadecenoyl-CoA = 1,2,3-tri-(9Z-octadecenoyl)-glycerol + CoA. The catalysed reaction is hexadecan-1-ol + (9Z)-octadecenoyl-CoA = hexadecanyl (9Z)-octadecenoate + CoA. It carries out the reaction (9Z)-hexadecen-1-ol + (9Z)-octadecenoyl-CoA = 1-O-(9Z)-hexadecenyl (9Z)-octadecenoate + CoA. The enzyme catalyses octadecan-1-ol + (9Z)-octadecenoyl-CoA = 1-O-octadecyl (9Z)-octadecenoate + CoA. It catalyses the reaction (9Z)-octadecen-1-ol + (9Z)-octadecenoyl-CoA = 1-O-(9Z)-octadecenyl (9Z)-octadecenoate + CoA. The catalysed reaction is hexadecan-1-ol + (9Z)-hexadecenoyl-CoA = 1-O-hexadecyl (9Z)-hexadecenoate + CoA. It carries out the reaction hexadecan-1-ol + octadecanoyl-CoA = hexadecanyl octadecanoate + CoA. The enzyme catalyses 11-cis-retinol + hexadecanoyl-CoA = 11-cis-retinyl hexadecanoate + CoA. It catalyses the reaction 1-O-(9Z-octadecenyl)-glycerol + (9Z)-octadecenoyl-CoA = 1-O-(9Z-octadecyl)-3-(9Z-octadecenoyl)-glycerol + CoA. The catalysed reaction is 1-(9Z-octadecenoyl)-glycerol + (9Z)-octadecenoyl-CoA = 1,2-di-(9Z-octadecenoyl)-glycerol + CoA. It carries out the reaction 11-cis-retinol + tetradecanoyl-CoA = 11-cis-retinyl tetradecanoate + CoA. The enzyme catalyses 9-cis-retinol + tetradecanoyl-CoA = 9-cis-retinyl tetradecanoate + CoA. It catalyses the reaction 13-cis-retinol + tetradecanoyl-CoA = 13-cis-retinyl tetradecanoate + CoA. The catalysed reaction is all-trans-retinol + tetradecanoyl-CoA = all-trans-retinyl tetradecanoate + CoA. It carries out the reaction tetradecan-1-ol + tetradecanoyl-CoA = tetradecanyl tetradecanoate + CoA. 11-cis retinoids act as allosteric modulators of acyl-CoA retinol O-fatty-acyltransferase (ARAT) activity by suppressing esterification of 9-cis, 13-cis, or all-trans retinols concurrently increasing the enzyme specificity toward 11-cis isomer. Functionally, acyltransferase that catalyzes the formation of ester bonds between fatty alcohols and fatty acyl-CoAs to form wax monoesters. Shows a preference for medium chain acyl-CoAs from C12 to C16 in length and fatty alcohols shorter than C20, as the acyl donors and acceptors, respectively. Also possesses acyl-CoA retinol acyltransferase (ARAT) activity that preferentially esterifies 11-cis-retinol, a chromophore precursor of bleached opsin pigments in cone cells. Shows higher catalytic efficiency toward 11-cis-retinol versus 9-cis-retinol, 13-cis-retinol, and all-trans-retinol substrates. The polypeptide is Acyl-CoA wax alcohol acyltransferase 2 (AWAT2) (Homo sapiens (Human)).